The sequence spans 304 residues: Aspartate carbamoyltransferase catalytic subunit (304 aa).

The carbamoyl phosphate site is built by arginine 55 and threonine 56. Lysine 84 contributes to the L-aspartate binding site. Residues arginine 105, histidine 133, and glutamine 136 each contribute to the carbamoyl phosphate site. Residues arginine 165 and arginine 226 each contribute to the L-aspartate site. Carbamoyl phosphate contacts are provided by leucine 265 and proline 266.

It belongs to the aspartate/ornithine carbamoyltransferase superfamily. ATCase family. As to quaternary structure, heterooligomer of catalytic and regulatory chains.

It carries out the reaction carbamoyl phosphate + L-aspartate = N-carbamoyl-L-aspartate + phosphate + H(+). It participates in pyrimidine metabolism; UMP biosynthesis via de novo pathway; (S)-dihydroorotate from bicarbonate: step 2/3. Functionally, catalyzes the condensation of carbamoyl phosphate and aspartate to form carbamoyl aspartate and inorganic phosphate, the committed step in the de novo pyrimidine nucleotide biosynthesis pathway. The protein is Aspartate carbamoyltransferase catalytic subunit of Methanothrix thermoacetophila (strain DSM 6194 / JCM 14653 / NBRC 101360 / PT) (Methanosaeta thermophila).